Reading from the N-terminus, the 293-residue chain is Nucleotide-binding protein Csac_1160 (293 aa).

Residue 11 to 18 (GMSGAGKS) participates in ATP binding. 62-65 (DIRG) serves as a coordination point for GTP.

This sequence belongs to the RapZ-like family.

Its function is as follows. Displays ATPase and GTPase activities. This chain is Nucleotide-binding protein Csac_1160, found in Caldicellulosiruptor saccharolyticus (strain ATCC 43494 / DSM 8903 / Tp8T 6331).